Reading from the N-terminus, the 371-residue chain is uncharacterized protein (371 aa).

An ATP-binding site is contributed by 33–40 (GPLNSGKT).

It belongs to the archaeal ATPase family.

This is an uncharacterized protein from Methanocaldococcus jannaschii (strain ATCC 43067 / DSM 2661 / JAL-1 / JCM 10045 / NBRC 100440) (Methanococcus jannaschii).